The chain runs to 597 residues: MKNIRNFSIIAHIDHGKSTLADRFIQFCGGLELREMSAQVLDSMDIEKERGITIKAQTAALQYKARDGQVYNLNLIDTPGHVDFSYEVSRSLSACEGALLVVDASQGVEAQTVANCYTAIDLGVEVVPVLNKIDLPAADPERISQEIEDIIGIEAVEAVRASAKSGIGIEDILEEVVNKIPPPKGDPDGPLKALIVDSWFDNYVGVVMLVRVIDGSLKPKDKIKFMATGAEHLCEQVGVFTPKSVQRPSLNAGEVGFVIAGIKELKSAKVGDTITLVSKPATEALPGFKDVQSQVFAGLYPVESHDYEALRDALEKLQLNDASLKYEPEVSQALGFGFRCGFLGLLHLEIVQERLEREFDMDLITTAPTVNYEVVMKDGTVEVVSNPSRMPEAGKYDELREPIITSTILVPQDYVGSVMTLCNQKRGVQRNMQYMGRQVMLTYDLPMNEVVMDFFDKLKSTSRGYASLDYEFKEFQSADLVKLDVLVNGEKVDALSLIVHRASSVYRGRELVAKMRELIPRQMFDIAVQAAIGGHIIARETVKALRKNVLAKCYGGDITRKKKLLEKQKAGKKRMKQVGNVEIPQEAFLAILQVGDK.

Residues 2–184 (KNIRNFSIIA…EVVNKIPPPK (183 aa)) form the tr-type G domain. GTP-binding positions include 14 to 19 (DHGKST) and 131 to 134 (NKID).

Belongs to the TRAFAC class translation factor GTPase superfamily. Classic translation factor GTPase family. LepA subfamily.

The protein localises to the cell inner membrane. It carries out the reaction GTP + H2O = GDP + phosphate + H(+). Its function is as follows. Required for accurate and efficient protein synthesis under certain stress conditions. May act as a fidelity factor of the translation reaction, by catalyzing a one-codon backward translocation of tRNAs on improperly translocated ribosomes. Back-translocation proceeds from a post-translocation (POST) complex to a pre-translocation (PRE) complex, thus giving elongation factor G a second chance to translocate the tRNAs correctly. Binds to ribosomes in a GTP-dependent manner. The sequence is that of Elongation factor 4 from Chromobacterium violaceum (strain ATCC 12472 / DSM 30191 / JCM 1249 / CCUG 213 / NBRC 12614 / NCIMB 9131 / NCTC 9757 / MK).